We begin with the raw amino-acid sequence, 355 residues long: Uroporphyrinogen decarboxylase (355 aa).

Residues 27–31, Asp77, Tyr154, Thr209, and His327 contribute to the substrate site; that span reads RQAGR.

It belongs to the uroporphyrinogen decarboxylase family. As to quaternary structure, homodimer.

The protein resides in the cytoplasm. It carries out the reaction uroporphyrinogen III + 4 H(+) = coproporphyrinogen III + 4 CO2. It functions in the pathway porphyrin-containing compound metabolism; protoporphyrin-IX biosynthesis; coproporphyrinogen-III from 5-aminolevulinate: step 4/4. In terms of biological role, catalyzes the decarboxylation of four acetate groups of uroporphyrinogen-III to yield coproporphyrinogen-III. The protein is Uroporphyrinogen decarboxylase of Erwinia tasmaniensis (strain DSM 17950 / CFBP 7177 / CIP 109463 / NCPPB 4357 / Et1/99).